Consider the following 596-residue polypeptide: Elongation factor 4 (596 aa).

Residues 2-184 enclose the tr-type G domain; the sequence is KHIRNFSIIA…MIVKDVPPPV (183 aa). GTP is bound by residues 14 to 19 and 131 to 134; these read DHGKST and NKID.

This sequence belongs to the TRAFAC class translation factor GTPase superfamily. Classic translation factor GTPase family. LepA subfamily.

The protein localises to the cell inner membrane. The catalysed reaction is GTP + H2O = GDP + phosphate + H(+). Its function is as follows. Required for accurate and efficient protein synthesis under certain stress conditions. May act as a fidelity factor of the translation reaction, by catalyzing a one-codon backward translocation of tRNAs on improperly translocated ribosomes. Back-translocation proceeds from a post-translocation (POST) complex to a pre-translocation (PRE) complex, thus giving elongation factor G a second chance to translocate the tRNAs correctly. Binds to ribosomes in a GTP-dependent manner. The sequence is that of Elongation factor 4 from Pseudoalteromonas translucida (strain TAC 125).